We begin with the raw amino-acid sequence, 672 residues long: Iron-phytosiderophore transporter YSL15 (672 aa).

Residues 1 to 11 (MEHADADRTRV) show a composition bias toward basic and acidic residues. Positions 1 to 27 (MEHADADRTRVAPEIGSLHDEDAEADP) are disordered. The next 14 helical transmembrane spans lie at 47–67 (GVVAAALIGFVFSVIVMKIAL), 70–90 (GLVPTLNISAALLAFLALRGW), 115–135 (CAVACYTIAFGGGFGSTLLGL), 158–178 (GIGWMVGLLLAISFAGNLSLI), 218–238 (LHGFLKYFGLSLFWSFFQWFY), 279–299 (LVNLSTLLGAVISWGIMWPLI), 325–345 (FLCIALIMGDGLYHFVKVTGV), 390–410 (MAYSGYFLLSIIAVITIPIMF), 418–438 (VIIAYALGPVLGFANSYGAGL), 450–470 (IALFVFAAWAGKDNGVIAGLV), 504–524 (VGELIGTGIGCFIAPLTFMLF), 556–576 (ISALPKHCLSLSVGFFAFAVL), 602–622 (FLVGASFAIDMCVGSLVLFAW), and 630–650 (AAFMVPAVASGLMCGDGIWTF).

Belongs to the YSL (TC 2.A.67.2) family. In terms of tissue distribution, expressed in root phloem and at low levels in the shoot companion cells.

The protein resides in the cell membrane. Involved in Fe(3+) uptake from the rhizosphere and phloem transport of iron. Plays an important role in iron homeostasis during the early stages of growth. Transports Fe(3+)-phytosiderophore, but not Fe(3+)- or Fe(2+)-nicotianamine. May not transport other chelated metals. This Oryza sativa subsp. japonica (Rice) protein is Iron-phytosiderophore transporter YSL15 (YSL15).